Here is an 85-residue protein sequence, read N- to C-terminus: U4-theraphotoxin-Hhn1q (85 aa).

The N-terminal stretch at 1–22 is a signal peptide; sequence MKVTLIAILTCAAVLVLHTTAA. Residues 23-48 constitute a propeptide that is removed on maturation; the sequence is EELEAESQLMEVGMPDTELAAVDEER. Disulfide bonds link Cys52–Cys66, Cys56–Cys77, and Cys71–Cys82.

Belongs to the neurotoxin 12 (Hwtx-2) family. 02 (Hwtx-2) subfamily. In terms of tissue distribution, expressed by the venom gland.

The protein resides in the secreted. Functionally, postsynaptic neurotoxin. The chain is U4-theraphotoxin-Hhn1q from Cyriopagopus hainanus (Chinese bird spider).